Reading from the N-terminus, the 182-residue chain is Ribosome-recycling factor (182 aa).

This sequence belongs to the RRF family.

The protein localises to the cytoplasm. In terms of biological role, responsible for the release of ribosomes from messenger RNA at the termination of protein biosynthesis. May increase the efficiency of translation by recycling ribosomes from one round of translation to another. In Prochlorococcus marinus (strain SARG / CCMP1375 / SS120), this protein is Ribosome-recycling factor.